The primary structure comprises 569 residues: Proline--tRNA ligase (569 aa).

The protein belongs to the class-II aminoacyl-tRNA synthetase family. ProS type 1 subfamily. Homodimer.

It localises to the cytoplasm. It carries out the reaction tRNA(Pro) + L-proline + ATP = L-prolyl-tRNA(Pro) + AMP + diphosphate. Functionally, catalyzes the attachment of proline to tRNA(Pro) in a two-step reaction: proline is first activated by ATP to form Pro-AMP and then transferred to the acceptor end of tRNA(Pro). As ProRS can inadvertently accommodate and process non-cognate amino acids such as alanine and cysteine, to avoid such errors it has two additional distinct editing activities against alanine. One activity is designated as 'pretransfer' editing and involves the tRNA(Pro)-independent hydrolysis of activated Ala-AMP. The other activity is designated 'posttransfer' editing and involves deacylation of mischarged Ala-tRNA(Pro). The misacylated Cys-tRNA(Pro) is not edited by ProRS. This Colwellia psychrerythraea (strain 34H / ATCC BAA-681) (Vibrio psychroerythus) protein is Proline--tRNA ligase.